An 821-amino-acid polypeptide reads, in one-letter code: Serine/threonine-protein kinase RAD53 (821 aa).

A Phosphoserine modification is found at S24. Residues 66-116 (WTFGRNPACDYHLGNISRLSNKHFQILLGEDGNLLLNDISTNGTWLNGQKV) form the FHA 1 domain. The residue at position 175 (S175) is a Phosphoserine. The 269-residue stretch at 198-466 (SIIDEVVGQG…AAKALNHPWI (269 aa)) folds into the Protein kinase domain. Residues 204–212 (VGQGAFATV) and K227 contribute to the ATP site. The active-site Proton acceptor is the D319. 2 positions are modified to phosphoserine: S547 and S560. The 64-residue stretch at 601–664 (FFIGRSEDCN…NVSYLNNNRM (64 aa)) folds into the FHA 2 domain. Positions 735-770 (AAQRANQPSASSSSMSAKKPPVSDTNNNGNNSVLND) are disordered. A compositionally biased stretch (low complexity) spans 742–770 (PSASSSSMSAKKPPVSDTNNNGNNSVLND). Phosphoserine occurs at positions 774 and 793. Positions 791-821 (SLSQSQIDPSKKVKRAKLDQTSKGPENLQFS) are disordered. Over residues 809-821 (DQTSKGPENLQFS) the composition is skewed to polar residues.

Belongs to the protein kinase superfamily. CAMK Ser/Thr protein kinase family. CHEK2 subfamily. Interacts (via domain FHA 1) with PTC2 (when phosphorylated); the interaction is direct and serves to regulate DNA damage checkpoint signaling. Interacts with PIN4. In terms of processing, autophosphorylated. Phosphorylated in response to DNA double-strand breaks; dephosphorylation is mediated by PTC2 and PTC3.

The protein resides in the nucleus. The enzyme catalyses L-seryl-[protein] + ATP = O-phospho-L-seryl-[protein] + ADP + H(+). It catalyses the reaction L-threonyl-[protein] + ATP = O-phospho-L-threonyl-[protein] + ADP + H(+). The catalysed reaction is L-tyrosyl-[protein] + ATP = O-phospho-L-tyrosyl-[protein] + ADP + H(+). Inactivated by dephosphorylation via recruitment of PTC2. Controls S-phase checkpoint as well as G1 and G2 DNA damage checkpoints. Phosphorylates proteins on serine, threonine, and tyrosine. Prevents entry into anaphase and mitotic exit after DNA damage via regulation of the Polo kinase CDC5. Seems to be involved in the phosphorylation of RPH1. The sequence is that of Serine/threonine-protein kinase RAD53 (RAD53) from Saccharomyces cerevisiae (strain ATCC 204508 / S288c) (Baker's yeast).